A 204-amino-acid polypeptide reads, in one-letter code: Phosphopantothenoylcysteine decarboxylase (204 aa).

FMN-binding positions include Thr-53 and 104 to 107; that span reads DANT. Asn-140 is a binding site for substrate. Catalysis depends on Cys-173, which acts as the Proton donor.

This sequence belongs to the HFCD (homooligomeric flavin containing Cys decarboxylase) superfamily. In terms of assembly, homotrimer. The cofactor is FMN.

The enzyme catalyses N-[(R)-4-phosphopantothenoyl]-L-cysteine + H(+) = (R)-4'-phosphopantetheine + CO2. It participates in cofactor biosynthesis; coenzyme A biosynthesis; CoA from (R)-pantothenate: step 3/5. Its function is as follows. Catalyzes the decarboxylation of the cysteine moiety of 4-phosphopantothenoylcysteine to form 4'-phosphopantotheine and this reaction forms part of the biosynthesis of coenzyme A. The polypeptide is Phosphopantothenoylcysteine decarboxylase (Ppcdc) (Mus musculus (Mouse)).